Reading from the N-terminus, the 397-residue chain is Enoyl-[acyl-carrier-protein] reductase [NADH] (397 aa).

NAD(+) is bound by residues 48–53 (GASTGY), 74–75 (FE), 111–112 (DA), and 139–140 (VA). A substrate-binding site is contributed by Y225. Y235 acts as the Proton donor in catalysis. NAD(+) contacts are provided by residues K244 and 273 to 275 (VVT).

Belongs to the TER reductase family. In terms of assembly, monomer.

It carries out the reaction a 2,3-saturated acyl-[ACP] + NAD(+) = a (2E)-enoyl-[ACP] + NADH + H(+). It participates in lipid metabolism; fatty acid biosynthesis. Functionally, involved in the final reduction of the elongation cycle of fatty acid synthesis (FAS II). Catalyzes the reduction of a carbon-carbon double bond in an enoyl moiety that is covalently linked to an acyl carrier protein (ACP). In Burkholderia pseudomallei (strain 1106a), this protein is Enoyl-[acyl-carrier-protein] reductase [NADH].